A 539-amino-acid chain; its full sequence is Eukaryotic translation initiation factor 3 subunit L (539 aa).

The region spanning 302–514 (TFSSILLYIQ…IHIADTKVSH (213 aa)) is the PCI domain.

This sequence belongs to the eIF-3 subunit L family. In terms of assembly, component of the eukaryotic translation initiation factor 3 (eIF-3) complex.

Its subcellular location is the cytoplasm. Functionally, component of the eukaryotic translation initiation factor 3 (eIF-3) complex, which is involved in protein synthesis of a specialized repertoire of mRNAs and, together with other initiation factors, stimulates binding of mRNA and methionyl-tRNAi to the 40S ribosome. The eIF-3 complex specifically targets and initiates translation of a subset of mRNAs involved in cell proliferation. This is Eukaryotic translation initiation factor 3 subunit L from Anopheles gambiae (African malaria mosquito).